We begin with the raw amino-acid sequence, 522 residues long: 5,6-dihydroxyindole-2-carboxylic acid oxidase (522 aa).

The signal sequence occupies residues 1 to 21 (MLRTSCGGMLLLVHALGLVRA). The Lumenal, melanosome segment spans residues 22–470 (QFPRACVTPE…RPLTPTQIVT (449 aa)). Intrachain disulfides connect C27-C38, C39-C59, C50-C89, C91-C100, and C103-C112. N164 and N171 each carry an N-linked (GlcNAc...) asparagine glycan. The Zn(2+) site is built by H182, H205, and H214. 2 cysteine pairs are disulfide-bonded: C248-C251 and C280-C293. The N-linked (GlcNAc...) asparagine glycan is linked to N294. Residues H367 and H371 each contribute to the Zn(2+) site. A glycan (N-linked (GlcNAc...) asparagine) is linked at N375. Residue H394 coordinates Zn(2+). The helical transmembrane segment at 471 to 491 (VAVVAALLLVAIIFAASTCVV) threads the bilayer. Topologically, residues 492–522 (HLRGNRTEGRQPLLGDQYQRYEDHNKTQSVV) are cytoplasmic.

The protein belongs to the tyrosinase family. Cu(2+) is required as a cofactor. Zn(2+) serves as cofactor.

Its subcellular location is the melanosome membrane. The enzyme catalyses 2 5,6-dihydroxyindole-2-carboxylate + O2 = 2 indole-5,6-quinone-2-carboxylate + 2 H2O. It functions in the pathway pigment biosynthesis; melanin biosynthesis. In terms of biological role, plays a role in melanin biosynthesis. Catalyzes the oxidation of 5,6-dihydroxyindole-2-carboxylic acid (DHICA) into indole-5,6-quinone-2-carboxylic acid. May regulate or influence the type of melanin synthesized. Also to a lower extent, capable of hydroxylating tyrosine and producing melanin. This chain is 5,6-dihydroxyindole-2-carboxylic acid oxidase (tyrp1), found in Carassius auratus (Goldfish).